Reading from the N-terminus, the 541-residue chain is MPRRKQSHPQPVKCEGVKVDTEDSLDEGPGALVLESDLLLGQDLEFEEEEEEEEGDGNSDQLMGFERDSEGDSLGARPGLPYGLSDDESGGGRALSAESEVEEPARGPGEARGERPGPACQLCGGPTGEGPCCGAGGPGGGPLLPPRLLYSCRLCTFVSHYSSHLKRHMQTHSGEKPFRCGRCPYASAQLVNLTRHTRTHTGEKPYRCPHCPFACSSLGNLRRHQRTHAGPPTPPCPTCGFRCCTPRPARPPSPTEQEGAVPRRPEDALLLPDLSLHVPPGGASFLPDCGQLRGEGEGLCGTGSEPLPELLFPWTCRGCGQELEEGEGSRLGAAMCGRCMRGEAGGGASGGPQGPSDKGFACSLCPFATHYPNHLARHMKTHSGEKPFRCARCPYASAHLDNLKRHQRVHTGEKPYKCPLCPYACGNLANLKRHGRIHSGDKPFRCSLCNYSCNQSMNLKRHMLRHTGEKPFRCATCAYTTGHWDNYKRHQKVHGHGGAGGPGLSASEGWAPPHSPPSVLSSRGPPALGTAGSRAVHTDSS.

The interval 1 to 118 (MPRRKQSHPQ…GEARGERPGP (118 aa)) is disordered. A compositionally biased stretch (acidic residues) spans 44–57 (LEFEEEEEEEEGDG). A phosphoserine mark is found at serine 85 and serine 96. The segment covering 103–115 (EPARGPGEARGER) has biased composition (basic and acidic residues). C2H2-type zinc fingers lie at residues 150–172 (YSCR…MQTH), 178–200 (FRCG…TRTH), 206–228 (YRCP…QRTH), 360–382 (FACS…MKTH), 388–410 (FRCA…QRVH), 416–438 (YKCP…GRIH), 444–466 (FRCS…MLRH), and 472–494 (FRCA…QKVH). The disordered stretch occupies residues 492–541 (KVHGHGGAGGPGLSASEGWAPPHSPPSVLSSRGPPALGTAGSRAVHTDSS).

Belongs to the krueppel C2H2-type zinc-finger protein family. Binds DNA. Can associate with the proximal promoter regions of PAX6 and SP4, and their known targets including ARR3, RHO, OPN1MW2 and OPN1SW. As to expression, in the retina, expressed in the outer and inner nuclear layers, and the ganglion cell layer.

It is found in the nucleus. In terms of biological role, transcriptional regulator that plays a role in retinal development and maintenance. In Homo sapiens (Human), this protein is Zinc finger protein 513 (ZNF513).